Consider the following 396-residue polypeptide: Pinosylvin synthase 1 (396 aa).

60 to 63 (KFKR) contributes to the substrate binding site. The active site involves Cys170. Substrate-binding positions include Leu273 and 311–313 (GGH).

The protein belongs to the thiolase-like superfamily. Chalcone/stilbene synthases family. In terms of assembly, homodimer.

The protein resides in the cytoplasm. It catalyses the reaction (E)-cinnamoyl-CoA + 3 malonyl-CoA + 3 H(+) = (E)-pinosylvin + 4 CO2 + 4 CoA. The catalysed reaction is 3-phenylpropanoyl-CoA + 3 malonyl-CoA + 3 H(+) = dihydropinosylvin + 4 CO2 + 4 CoA. It participates in phytoalexin biosynthesis; pinosylvin biosynthesis. Catalyzes the production of pinosylvin from cinnamoyl-CoA and malonyl-CoA, and dihydropinosylvin from dihydrocinnamoyl-CoA. This is Pinosylvin synthase 1 from Pinus strobus (Eastern white pine).